A 140-amino-acid polypeptide reads, in one-letter code: uncharacterized protein (140 aa).

Residues 121 to 140 (EEVKNGELIDPNVTTEDEKL) are disordered.

This is an uncharacterized protein from Schizosaccharomyces pombe (strain 972 / ATCC 24843) (Fission yeast).